The sequence spans 85 residues: Large ribosomal subunit protein bL31B (85 aa).

The protein belongs to the bacterial ribosomal protein bL31 family. Type B subfamily. Part of the 50S ribosomal subunit.

The sequence is that of Large ribosomal subunit protein bL31B from Stutzerimonas stutzeri (strain A1501) (Pseudomonas stutzeri).